A 210-amino-acid polypeptide reads, in one-letter code: Large ribosomal subunit protein uL4 (210 aa).

A compositionally biased stretch (polar residues) spans 47-64 (SRQGTRSQKSRSEVSGSN). The segment at 47-83 (SRQGTRSQKSRSEVSGSNKKPWRQKGTGRARSGSVKS) is disordered.

Belongs to the universal ribosomal protein uL4 family. As to quaternary structure, part of the 50S ribosomal subunit.

Functionally, one of the primary rRNA binding proteins, this protein initially binds near the 5'-end of the 23S rRNA. It is important during the early stages of 50S assembly. It makes multiple contacts with different domains of the 23S rRNA in the assembled 50S subunit and ribosome. Its function is as follows. Forms part of the polypeptide exit tunnel. The sequence is that of Large ribosomal subunit protein uL4 from Blochmanniella pennsylvanica (strain BPEN).